A 301-amino-acid polypeptide reads, in one-letter code: Aquaporin-10 (301 aa).

Topologically, residues 1-22 are cytoplasmic; that stretch reads MVFTQAPAEIMGHLRIRSLLAR. Residues 23 to 41 form a helical membrane-spanning segment; sequence QCLAEFLGVFVLMLLTQGA. Residues 42–55 are Extracellular-facing; that stretch reads VAQAVTSGETKGNF. Residues 56-75 traverse the membrane as a helical segment; sequence FTMFLAGSLAVTIAIYVGGN. At 76–77 the chain is on the cytoplasmic side; the sequence is VS. Residues 78 to 90 constitute an intramembrane region (discontinuously helical); sequence GAHLNPAFSLAMC. The NPA 1 motif lies at 82–84; it reads NPA. Over 91-96 the chain is Cytoplasmic; it reads IVGRLP. The helical transmembrane segment at 97–121 threads the bilayer; that stretch reads WVKLPIYILVQLLSAFCASGATYVL. The Extracellular portion of the chain corresponds to 122-158; it reads YHDALQNYTGGNLTVTGPKETASIFATYPAPYLSLNN. N-linked (GlcNAc...) asparagine glycosylation is found at N128 and N133. The chain crosses the membrane as a helical span at residues 159–176; the sequence is GFLDQVLGTGMLIVGLLA. The Cytoplasmic portion of the chain corresponds to 177-188; sequence ILDRRNKGVPAG. A helical transmembrane segment spans residues 189-205; it reads LEPVVVGMLILALGLSM. The Extracellular segment spans residues 206–208; sequence GAN. Residues 209–223 constitute an intramembrane region (discontinuously helical); sequence CGIPLNPARDLGPRL. The short motif at 214-216 is the NPA 2 element; it reads NPA. Residues 224-241 lie on the Extracellular side of the membrane; sequence FTYVAGWGPEVFSAGNGW. Residues 242-262 traverse the membrane as a helical segment; the sequence is WWVPVVAPLVGATVGTATYQL. At 263-301 the chain is on the cytoplasmic side; the sequence is LVALHHPEGPEPAQDLVSAQHKASELETPASAQMLECKL.

Belongs to the MIP/aquaporin (TC 1.A.8) family. Homotetramer; each monomer provides an independent glycerol/water pore. In terms of processing, N-glycosylation at Asn-133 increases the stability of the protein but has no effect on its activity. As to expression, detected in epithelial cells on villi in the ileum, and also in stomach, jejunum, colon, rectum, white adipose tissue and placenta (at protein level). Expressed in duodenum and jejunum. Highest expression in absorptive epithelial cells at the tips of villi in the jejunum. Detected in subcutaneous adipose tissue.

It localises to the apical cell membrane. The protein localises to the cell membrane. The protein resides in the lipid droplet. The enzyme catalyses glycerol(in) = glycerol(out). It carries out the reaction H2O(in) = H2O(out). It catalyses the reaction urea(in) = urea(out). Its activity is regulated as follows. Glycerol transport is regulated by pH, with the porin being permeable to glycerol at pH 5.5 but not at pH 7.4. Water permeability, however, is not influenced by pH. Its function is as follows. Aquaglyceroporins form homotetrameric transmembrane channels, with each monomer independently mediating glycerol and water transport across the plasma membrane along their osmotic gradient. Could also be permeable to urea. Among aquaglyceroporins, it exhibits a unique pH-gated glycerol transport activity, being more active at acidic pH. It most likely plays a central role in the efflux of glycerol formed during triglyceride hydrolysis in adipocytes and in glycerol uptake by enterocytes, as both processes occur and are stimulated at acidic pH. This is Aquaporin-10 from Homo sapiens (Human).